We begin with the raw amino-acid sequence, 874 residues long: Alanine--tRNA ligase (874 aa).

4 residues coordinate Zn(2+): histidine 562, histidine 566, cysteine 665, and histidine 669.

This sequence belongs to the class-II aminoacyl-tRNA synthetase family. The cofactor is Zn(2+).

The protein localises to the cytoplasm. The enzyme catalyses tRNA(Ala) + L-alanine + ATP = L-alanyl-tRNA(Ala) + AMP + diphosphate. In terms of biological role, catalyzes the attachment of alanine to tRNA(Ala) in a two-step reaction: alanine is first activated by ATP to form Ala-AMP and then transferred to the acceptor end of tRNA(Ala). Also edits incorrectly charged Ser-tRNA(Ala) and Gly-tRNA(Ala) via its editing domain. The protein is Alanine--tRNA ligase of Pseudomonas syringae pv. tomato (strain ATCC BAA-871 / DC3000).